The primary structure comprises 716 residues: Calpain-1 catalytic subunit (716 aa).

In terms of domain architecture, Calpain catalytic spans 55-354 (LFRDEAFPPV…FTRLEICNLT (300 aa)). Ca(2+) contacts are provided by Q109 and D114. Catalysis depends on residues C115, H272, and N296. Ca(2+) is bound by residues D318 and E323. The residue at position 354 (T354) is a Phosphothreonine. The tract at residues 355–528 (PDALKSQRFR…KSAGTQELDD (174 aa)) is domain III. Residues 529 to 544 (QVQANLPDEQVLSEEE) are linker. 4 consecutive EF-hand domains span residues 543 to 578 (EEIDENFKSLFRQLAGEDMEISVKELRTILNRIISK), 587 to 620 (FSLESCRSMVNLMDRDGNGKLGLVEFNILWNRIR), 617 to 652 (NRIRNYLSIFRKFDLDKSGSMSAYEMRMAIEFAGFK), and 682 to 716 (VRLETMFRFFKTLDTDLDGVVTFDLFKWLQLTMFA). Positions 545-715 (IDENFKSLFR…LFKWLQLTMF (171 aa)) are domain IV. The Ca(2+) site is built by D600, D602, N604, K606, E611, D630, D632, S634, S636, and E641.

Belongs to the peptidase C2 family. Forms a heterodimer with a small (regulatory) subunit CAPNS1. Ca(2+) is required as a cofactor. Undergoes calcium-induced successive autoproteolytic cleavages that generate a membrane-bound 78 kDa active form and an intracellular 75 kDa active form. Calpastatin reduces with high efficiency the transition from 78 kDa to 75 kDa calpain forms.

Its subcellular location is the cytoplasm. It localises to the cell membrane. It carries out the reaction Broad endopeptidase specificity.. Its activity is regulated as follows. Activated by micromolar concentrations of calcium and inhibited by calpastatin. Its function is as follows. Calcium-regulated non-lysosomal thiol-protease which catalyzes limited proteolysis of substrates involved in cytoskeletal remodeling and signal transduction. Proteolytically cleaves CTBP1. Cleaves and activates caspase-7 (CASP7). This chain is Calpain-1 catalytic subunit, found in Bos taurus (Bovine).